Reading from the N-terminus, the 205-residue chain is Peptidyl-tRNA hydrolase (205 aa).

Residue Y14 coordinates tRNA. H19 acts as the Proton acceptor in catalysis. TRNA is bound by residues Y68, N70, and N116.

This sequence belongs to the PTH family. As to quaternary structure, monomer.

The protein localises to the cytoplasm. It carries out the reaction an N-acyl-L-alpha-aminoacyl-tRNA + H2O = an N-acyl-L-amino acid + a tRNA + H(+). Functionally, hydrolyzes ribosome-free peptidyl-tRNAs (with 1 or more amino acids incorporated), which drop off the ribosome during protein synthesis, or as a result of ribosome stalling. Catalyzes the release of premature peptidyl moieties from peptidyl-tRNA molecules trapped in stalled 50S ribosomal subunits, and thus maintains levels of free tRNAs and 50S ribosomes. The polypeptide is Peptidyl-tRNA hydrolase (Caulobacter vibrioides (strain ATCC 19089 / CIP 103742 / CB 15) (Caulobacter crescentus)).